A 610-amino-acid chain; its full sequence is GATOR complex protein NPRL3 (610 aa).

Serine 437 carries the phosphoserine modification. The tract at residues 474–501 (REASEDHSSLASDNIAVQPSSSHKSNFS) is disordered. A compositionally biased stretch (polar residues) spans 482-501 (SLASDNIAVQPSSSHKSNFS).

The protein belongs to the NPR3 family. As to quaternary structure, component of the GATOR complex consisting of mio, Nup44A/Seh1, Im11, Nplr3, Nplr2, Wdr24, Wdr59 and Sec13. Within the GATOR complex, probable component of the GATOR1 subcomplex which is likely composed of Iml1, Nplr2 and Nplr3. Interacts with Nprl2.

Its subcellular location is the cytoplasm. It localises to the lysosome. Functionally, an essential component of the GATOR subcomplex GATOR1 which functions as an inhibitor of the amino acid-sensing branch of the TORC1 signaling pathway. The two GATOR subcomplexes, GATOR1 and GATOR2, regulate the TORC1 pathway in order to mediate metabolic homeostasis, female gametogenesis and the response to amino acid limitation and complete starvation. The function of GATOR1 in negatively regulating the TORC1 pathway is essential for maintaining baseline levels of TORC1 activity under nutrient rich conditions, and for promoting survival during amino acid or complete starvation by inhibiting TORC1-dependent cell growth and promoting catabolic metabolism and autophagy. In addition, this inhibition of TORC1 is necessary to maintain female fertility under normal conditions and during periods of nutrient stress. GATOR1 and GATOR2 act at different stages of oogenesis to regulate TORC1 in order to control meiotic entry and promote oocyte growth and development. After exactly four mitotic cyst divisions, the GATOR1 complex members (Iml1, Nprl2 and Nprl3) down-regulate TORC1 to slow cellular metabolism and promote the mitotic/meiotic transition. At later stages of oogenesis, the mio and Nup44A components of the GATOR2 complex inhibit GATOR1 and thus activate TORC1 to promote meiotic progression, and drive oocyte growth and development. This chain is GATOR complex protein NPRL3, found in Drosophila melanogaster (Fruit fly).